Here is a 104-residue protein sequence, read N- to C-terminus: Small ribosomal subunit protein bS18 (104 aa).

Residues 1–14 are compositionally biased toward basic and acidic residues; the sequence is MMNNEHDNFQKEVE. Residues 1-25 are disordered; it reads MMNNEHDNFQKEVETTTETTFNREE.

Belongs to the bacterial ribosomal protein bS18 family. Part of the 30S ribosomal subunit. Forms a tight heterodimer with protein bS6.

Its function is as follows. Binds as a heterodimer with protein bS6 to the central domain of the 16S rRNA, where it helps stabilize the platform of the 30S subunit. The sequence is that of Small ribosomal subunit protein bS18 from Mycoplasma pneumoniae (strain ATCC 29342 / M129 / Subtype 1) (Mycoplasmoides pneumoniae).